Here is a 156-residue protein sequence, read N- to C-terminus: Small ribosomal subunit protein uS7 (156 aa).

Belongs to the universal ribosomal protein uS7 family. Part of the 30S ribosomal subunit. Contacts proteins S9 and S11.

Its function is as follows. One of the primary rRNA binding proteins, it binds directly to 16S rRNA where it nucleates assembly of the head domain of the 30S subunit. Is located at the subunit interface close to the decoding center, probably blocks exit of the E-site tRNA. The sequence is that of Small ribosomal subunit protein uS7 from Vibrio cholerae serotype O1 (strain ATCC 39315 / El Tor Inaba N16961).